The chain runs to 150 residues: Protein ORF35 (150 aa).

The polypeptide is Protein ORF35 (ORF35) (Homo sapiens (Human)).